Reading from the N-terminus, the 208-residue chain is Uracil phosphoribosyltransferase (208 aa).

5-phospho-alpha-D-ribose 1-diphosphate contacts are provided by residues R78, R103, and 130-138 (DPMLATGGT). Residues I193 and 198 to 200 (GDA) contribute to the uracil site. Residue D199 coordinates 5-phospho-alpha-D-ribose 1-diphosphate.

It belongs to the UPRTase family. Requires Mg(2+) as cofactor.

The catalysed reaction is UMP + diphosphate = 5-phospho-alpha-D-ribose 1-diphosphate + uracil. Its pathway is pyrimidine metabolism; UMP biosynthesis via salvage pathway; UMP from uracil: step 1/1. With respect to regulation, allosterically activated by GTP. Functionally, catalyzes the conversion of uracil and 5-phospho-alpha-D-ribose 1-diphosphate (PRPP) to UMP and diphosphate. The protein is Uracil phosphoribosyltransferase of Blochmanniella floridana.